The sequence spans 340 residues: Cobalt-precorrin-5B C(1)-methyltransferase (340 aa).

It belongs to the CbiD family.

It catalyses the reaction Co-precorrin-5B + S-adenosyl-L-methionine = Co-precorrin-6A + S-adenosyl-L-homocysteine. Its pathway is cofactor biosynthesis; adenosylcobalamin biosynthesis; cob(II)yrinate a,c-diamide from sirohydrochlorin (anaerobic route): step 6/10. Its function is as follows. Catalyzes the methylation of C-1 in cobalt-precorrin-5B to form cobalt-precorrin-6A. This Pyrobaculum aerophilum (strain ATCC 51768 / DSM 7523 / JCM 9630 / CIP 104966 / NBRC 100827 / IM2) protein is Cobalt-precorrin-5B C(1)-methyltransferase.